The sequence spans 337 residues: Meiotic driver wtf4 (337 aa).

The span at 1 to 29 shows a compositional bias: basic and acidic residues; sequence MKNKDYPLRSSMDELSTKNDNEIDLEKGP. The interval 1 to 40 is disordered; that stretch reads MKNKDYPLRSSMDELSTKNDNEIDLEKGPLPEYNSEDEST. Helical transmembrane passes span 89–109, 119–139, 149–169, 176–196, 210–230, and 234–254; these read LLIS…CVNP, AFFV…FCFF, CIKV…VGLY, VVII…RSKF, CSIS…FWTL, and FSGL…TKGL.

It belongs to the WTF family. As to quaternary structure, homomer. Forms protein aggregates. The two isoforms can interact with each other and with themselves. High sequence similarity is required for their interaction.

The protein resides in the spore membrane. Its subcellular location is the vacuole membrane. It localises to the ascus epiplasm. It is found in the cytoplasm. The protein localises to the endoplasmic reticulum membrane. Functionally, promotes unequal transmission of alleles from the parental zygote to progeny spores by acting as poison/antidote system where the poison and antidote proteins are produced from the same locus; the poison component is trans-acting and targets all spores within an ascus whereas the antidote component is spore-specific, leading to poisoning of all progeny that do not inherit the allele. Its function is as follows. Localizes isoform 2 to the vacuole thereby facilitating its degradation. In terms of biological role, forms toxic aggregates that disrupt spore maturation. This chain is Meiotic driver wtf4, found in Schizosaccharomyces kambucha (Fission yeast).